We begin with the raw amino-acid sequence, 307 residues long: Bifunctional protein FolD 3 (307 aa).

Residues 169–171 (GRS), Ser194, and Ile235 each bind NADP(+).

It belongs to the tetrahydrofolate dehydrogenase/cyclohydrolase family. As to quaternary structure, homodimer.

It catalyses the reaction (6R)-5,10-methylene-5,6,7,8-tetrahydrofolate + NADP(+) = (6R)-5,10-methenyltetrahydrofolate + NADPH. The enzyme catalyses (6R)-5,10-methenyltetrahydrofolate + H2O = (6R)-10-formyltetrahydrofolate + H(+). It participates in one-carbon metabolism; tetrahydrofolate interconversion. Functionally, catalyzes the oxidation of 5,10-methylenetetrahydrofolate to 5,10-methenyltetrahydrofolate and then the hydrolysis of 5,10-methenyltetrahydrofolate to 10-formyltetrahydrofolate. The chain is Bifunctional protein FolD 3 from Ectopseudomonas mendocina (strain ymp) (Pseudomonas mendocina).